Consider the following 157-residue polypeptide: UPF0758 protein VC_0510 (157 aa).

Residues 36 to 157 (ALTNPDATKE…CTSFAERGWL (122 aa)) form the MPN domain. Zn(2+) is bound by residues histidine 107, histidine 109, and aspartate 120. The JAMM motif motif lies at 107 to 120 (HNHPSGDSTPSQAD).

It belongs to the UPF0758 family.

The sequence is that of UPF0758 protein VC_0510 from Vibrio cholerae serotype O1 (strain ATCC 39315 / El Tor Inaba N16961).